The sequence spans 1014 residues: Nebulette (1014 aa).

The tract at residues 1 to 24 (MRVPVFEDIKDETEEEKIGEEENE) is disordered. Over residues 9-24 (IKDETEEEKIGEEENE) the composition is skewed to acidic residues. 23 Nebulin repeats span residues 29–63 (FYKP…KSKD), 64–99 (KCTF…DLSN), 100–136 (SLYK…AKGF), 137–172 (SDYA…DTHT), 173–205 (YSAE…GIMN), 206–241 (KEPA…EMKD), 242–278 (KKHH…NMHD), 279–313 (PVSD…ENKG), 314–348 (MYHF…KNKG), 349–385 (KPML…EIKG), 386–422 (RSSL…EIKG), 423–459 (KGME…IIKG), 460–496 (KGMQ…EIKG), 497–533 (KGMQ…EIKG), 534–569 (KGMQ…KMLS), 570–599 (NYST…KKEV), 600–635 (GAGT…HATA), 636–666 (ISDP…KATP), 667–693 (VSMT…GELQ), 694–728 (RGTA…RATT), 729–759 (LSVT…QMKG), 760–794 (RPSL…KTKG), and 795–830 (RGFT…HIVE). Omega-N-methylarginine is present on Asp96. Position 795 is an omega-N-methylarginine (Arg795). Residues 836–953 (GIIVDLKVWR…VSSMRSMQHS (118 aa)) are linker. Residues 954–1014 (PNLRTYRAMY…LPANYIEFVN (61 aa)) form the SH3 domain.

As to quaternary structure, interacts (via nebulin repeats 1-5) with DESM (via rod region). Interacts (via SH3 domain) with XIRP2. Interacts with ZYX/Zyxin. As to expression, abundantly expressed in cardiac muscle, but not in skeletal or smooth muscle. Localized to Z-lines in cardiac cells and to dense bodies in nonmuscle cells. Isoform 2 is expressed in non-muscle cells such as in fibroblasts.

It localises to the cytoplasm. Binds to actin and plays an important role in the assembly of the Z-disk. May functionally link sarcomeric actin to the desmin intermediate filaments in the heart muscle sarcomeres. Its function is as follows. May play a role in the assembly of focal adhesions. This is Nebulette from Homo sapiens (Human).